Here is a 62-residue protein sequence, read N- to C-terminus: Large ribosomal subunit protein bL28 (62 aa).

This sequence belongs to the bacterial ribosomal protein bL28 family.

The chain is Large ribosomal subunit protein bL28 from Bacillus velezensis (strain DSM 23117 / BGSC 10A6 / LMG 26770 / FZB42) (Bacillus amyloliquefaciens subsp. plantarum).